The following is a 384-amino-acid chain: Guanine nucleotide-binding protein alpha-1 subunit (384 aa).

Gly-2 carries N-myristoyl glycine lipidation. Cys-5 carries the S-palmitoyl cysteine lipid modification. Residues His-38 to Leu-384 form the G-alpha domain. The interval Lys-41–Thr-54 is G1 motif. Residues Glu-49, Ser-50, Gly-51, Lys-52, Ser-53, Thr-54, Leu-188, Tyr-189, Thr-194, Gly-222, Asn-288, Lys-289, Asp-291, and Ala-356 each contribute to the GTP site. Ser-53 serves as a coordination point for Mg(2+). Residues Asp-186–Thr-194 form a G2 motif region. Thr-194 provides a ligand contact to Mg(2+). The tract at residues Tyr-215–Arg-224 is G3 motif. The tract at residues Met-284–Asp-291 is G4 motif. Residues Thr-354–Gln-359 form a G5 motif region.

It belongs to the G-alpha family. As to quaternary structure, g proteins are composed of 3 units; alpha, beta and gamma. The alpha chain contains the guanine nucleotide binding site. The cofactor is Mg(2+).

Functionally, guanine nucleotide-binding proteins (G proteins) are involved as modulators or transducers in various transmembrane signaling systems. The chain is Guanine nucleotide-binding protein alpha-1 subunit (GPA1) from Lupinus luteus (European yellow lupine).